Here is a 597-residue protein sequence, read N- to C-terminus: Kelch-like protein 21 (597 aa).

The 69-residue stretch at 35-103 folds into the BTB domain; sequence LDVTLEAAGG…SYTGRVAVSG (69 aa). The region spanning 138 to 239 is the BACK domain; the sequence is CLDMQDFAEA…RRFYLLAHVE (102 aa). 6 Kelch repeats span residues 287–335, 336–382, 384–422, 424–463, 464–512, and 513–560; these read ILVL…ALGN, DIYV…VLDG, LYVV…ACRG, LYAI…SFAP, KTVT…VLGG, and KLYV…SIFR. The tract at residues 570-597 is disordered; it reads GRGFELDGGSSDMDVGQPRPPQNPAELH. The segment covering 587–597 has biased composition (pro residues); that stretch reads PRPPQNPAELH.

As to quaternary structure, component of the BCR(KLHL21) E3 ubiquitin ligase complex, at least composed of CUL3, KLHL21 and RBX1.

It is found in the cytoplasm. Its subcellular location is the cytoskeleton. The protein localises to the spindle. Its pathway is protein modification; protein ubiquitination. Functionally, substrate-specific adapter of a BCR (BTB-CUL3-RBX1) E3 ubiquitin-protein ligase complex required for efficient chromosome alignment and cytokinesis. The BCR(KLHL21) E3 ubiquitin ligase complex regulates localization of the chromosomal passenger complex (CPC) from chromosomes to the spindle midzone in anaphase and mediates the ubiquitination of AURKB. Ubiquitination of AURKB by BCR(KLHL21) E3 ubiquitin ligase complex may not lead to its degradation by the proteasome. The sequence is that of Kelch-like protein 21 (KLHL21) from Bos taurus (Bovine).